Reading from the N-terminus, the 416-residue chain is RNA polymerase sigma factor SigA (416 aa).

The segment at 184-254 (MVQSNLRLVV…TRAIADQSRT (71 aa)) is sigma-70 factor domain-2. Residues 208-211 (DLIQ) carry the Interaction with polymerase core subunit RpoC motif. The segment at 263-338 (ETISRIKKTT…EADGETPEDE (76 aa)) is sigma-70 factor domain-3. The sigma-70 factor domain-4 stretch occupies residues 351–404 (VLDTLSPRERDVLRLRYGLDDGRMKTLEEIGQIFNVTRERIRQIEAKALRKLRH). A DNA-binding region (H-T-H motif) is located at residues 377–396 (LEEIGQIFNVTRERIRQIEA).

This sequence belongs to the sigma-70 factor family. RpoD/SigA subfamily. Interacts transiently with the RNA polymerase catalytic core.

Its subcellular location is the cytoplasm. In terms of biological role, sigma factors are initiation factors that promote the attachment of RNA polymerase to specific initiation sites and are then released. This sigma factor is the primary sigma factor during exponential growth. The protein is RNA polymerase sigma factor SigA of Microcystis aeruginosa.